The primary structure comprises 591 residues: MHAYRSHSCAALTAANVGETIRLSGWVHRRRDHGGVIFIDLRDHFGITQILCDPDSPVFAEVEKLRAEFCIRIDGEVKARAPELVNEKLPTGEIEVYIRDMEVLGAAGELPLQVFGDQEYPEETRLKYRYLDLRREKMQTNMMLRSDVVASIRKRMWDKQFREYQTPIITASSPEGARDFLVPSRQHPGKFYALPQAPQQFKQLLMVSGFDKYFQIAPCFRDEDPRADRSPTDFYQLDLEMSFVEQQDVFDTIEPVLRGVFEEFGDGATVDQQWPLISYADAALWYGTDKPDLRNPIKMQIVSEHFAGSGFAIFAKLLEQEGTQVRAIPAPKGGSRKFCDRMNKFAQEQGLPGMGYIFWRDQGEGMEAAGPLAKNIGPERTEAIRQQLDLGVGDAAFFLAGKPSQFEAVAGRARSVIGDELGLTEQNRFAFAWIVDFPMFEADEETGKIDFSHNPFSMPQGGLAALDGDPLSVLGYQYDLACNGYELVSGAIRNHQPEIMFKAFEVAGYGADEVRKRFGGMVNAFQYGAPPHGGCAAGIDRIVMLLADTANIREVILFPMNQRAEDLMMNAPSEPMPDQLMELGLRVLPQD.

E175 is an L-aspartate binding site. Residues 199–202 (QQFK) are aspartate. Residues R221 and H453 each contribute to the L-aspartate site. 221–223 (RDE) lines the ATP pocket. Residue E486 coordinates ATP. R493 is an L-aspartate binding site. 538–541 (GIDR) is a binding site for ATP.

The protein belongs to the class-II aminoacyl-tRNA synthetase family. Type 1 subfamily. Homodimer.

It is found in the cytoplasm. The catalysed reaction is tRNA(Asx) + L-aspartate + ATP = L-aspartyl-tRNA(Asx) + AMP + diphosphate. Functionally, aspartyl-tRNA synthetase with relaxed tRNA specificity since it is able to aspartylate not only its cognate tRNA(Asp) but also tRNA(Asn). Reaction proceeds in two steps: L-aspartate is first activated by ATP to form Asp-AMP and then transferred to the acceptor end of tRNA(Asp/Asn). The chain is Aspartate--tRNA(Asp/Asn) ligase from Jannaschia sp. (strain CCS1).